A 607-amino-acid polypeptide reads, in one-letter code: Elongation factor 4 (607 aa).

The tr-type G domain maps to 11–193 (EKIRNFSIIA…QIVEKVPAPQ (183 aa)). Residues 23 to 28 (DHGKST) and 140 to 143 (NKID) each bind GTP.

It belongs to the TRAFAC class translation factor GTPase superfamily. Classic translation factor GTPase family. LepA subfamily.

The protein localises to the cell membrane. It catalyses the reaction GTP + H2O = GDP + phosphate + H(+). In terms of biological role, required for accurate and efficient protein synthesis under certain stress conditions. May act as a fidelity factor of the translation reaction, by catalyzing a one-codon backward translocation of tRNAs on improperly translocated ribosomes. Back-translocation proceeds from a post-translocation (POST) complex to a pre-translocation (PRE) complex, thus giving elongation factor G a second chance to translocate the tRNAs correctly. Binds to ribosomes in a GTP-dependent manner. The protein is Elongation factor 4 of Lactococcus lactis subsp. cremoris (strain SK11).